Consider the following 468-residue polypeptide: COBRA-like protein 5 (468 aa).

Residues 1–22 form the signal peptide; it reads MELHRCSLLALLLAVTCSVAVA. N-linked (GlcNAc...) asparagine glycans are attached at residues N31, N156, N164, and N228. The disordered stretch occupies residues 251-278; that stretch reads GGGKNARAGDGRSRRNSGGGGGHSGGTE. 3 N-linked (GlcNAc...) asparagine glycosylation sites follow: N340, N355, and N374. A lipid anchor (GPI-anchor amidated asparagine) is attached at N443. Residues 444–468 constitute a propeptide, removed in mature form; the sequence is SAPIGPPRSVAAAASAILVVLLLVA.

It belongs to the COBRA family. In terms of tissue distribution, expressed mainly in developing sclerenchyma cells and in vascular bundles.

The protein localises to the cell membrane. Involved in determining the orientation of cell expansion, probably by playing an important role in cellulose deposition. May act by recruiting cellulose synthesizing complexes to discrete positions on the cell surface. The polypeptide is COBRA-like protein 5 (BC1) (Oryza sativa subsp. indica (Rice)).